The following is a 167-amino-acid chain: Bacterial non-heme ferritin (167 aa).

In terms of domain architecture, Ferritin-like diiron spans 1 to 145 (MLSKDIIKLL…DILDKIELIG (145 aa)). Fe cation is bound by residues Glu-17, Glu-50, His-53, Glu-94, and Gln-127.

Belongs to the ferritin family. Prokaryotic subfamily. As to quaternary structure, homooligomer of 24 subunits that assemble into a spherical protein shell (12 +/- 1 nM diameter) that can sequester at least 2000 iron atoms.

The protein resides in the cytoplasm. It carries out the reaction 4 Fe(2+) + O2 + 6 H2O = 4 iron(III) oxide-hydroxide + 12 H(+). Functionally, iron-storage protein. The chain is Bacterial non-heme ferritin (ftnA) from Helicobacter pylori (strain ATCC 700392 / 26695) (Campylobacter pylori).